The chain runs to 269 residues: Formamidopyrimidine-DNA glycosylase (269 aa).

Pro-2 (schiff-base intermediate with DNA) is an active-site residue. The active-site Proton donor is the Glu-3. Lys-57 (proton donor; for beta-elimination activity) is an active-site residue. 3 residues coordinate DNA: His-90, Arg-109, and Lys-150. The FPG-type zinc-finger motif lies at 235 to 269 (LVYGKAGEPCPECGEPLQELKIGQRNTFFCNECQQ). Catalysis depends on Arg-259, which acts as the Proton donor; for delta-elimination activity.

Belongs to the FPG family. Monomer. Zn(2+) is required as a cofactor.

It carries out the reaction Hydrolysis of DNA containing ring-opened 7-methylguanine residues, releasing 2,6-diamino-4-hydroxy-5-(N-methyl)formamidopyrimidine.. The enzyme catalyses 2'-deoxyribonucleotide-(2'-deoxyribose 5'-phosphate)-2'-deoxyribonucleotide-DNA = a 3'-end 2'-deoxyribonucleotide-(2,3-dehydro-2,3-deoxyribose 5'-phosphate)-DNA + a 5'-end 5'-phospho-2'-deoxyribonucleoside-DNA + H(+). Functionally, involved in base excision repair of DNA damaged by oxidation or by mutagenic agents. Acts as a DNA glycosylase that recognizes and removes damaged bases. Has a preference for oxidized purines, such as 7,8-dihydro-8-oxoguanine (8-oxoG). Has AP (apurinic/apyrimidinic) lyase activity and introduces nicks in the DNA strand. Cleaves the DNA backbone by beta-delta elimination to generate a single-strand break at the site of the removed base with both 3'- and 5'-phosphates. The sequence is that of Formamidopyrimidine-DNA glycosylase from Vibrio parahaemolyticus serotype O3:K6 (strain RIMD 2210633).